The chain runs to 649 residues: Stress-70 protein, mitochondrial (649 aa).

The N-terminal 46 residues, 1-46 (MISASRAAAARLVGAAASRGPTAARHKDGWNGLSHEAFRIVSRRDY), are a transit peptide targeting the mitochondrion. Positions 1–432 (MISASRAAAA…IQGGVLAGDV (432 aa)) are interaction with NFS1. Residues T63 and N64 each coordinate ADP. Residues 63 to 431 (TNSCVAVMEG…AIQGGVLAGD (369 aa)) are nucleotide-binding domain (NBD). Residue K76 is modified to N6-acetyllysine. T87 carries the phosphothreonine modification. N6-acetyllysine; alternate occurs at positions 135 and 138. 2 positions are modified to N6-succinyllysine; alternate: K135 and K138. K143 is modified (N6-acetyllysine). An N6-acetyllysine; alternate modification is found at K206. K206 bears the N6-succinyllysine; alternate mark. N6-malonyllysine; alternate is present on K206. An N6-acetyllysine mark is found at K234 and K288. Residue K300 is modified to N6-acetyllysine; alternate. Residue K300 is modified to N6-succinyllysine; alternate. E313, K316, and S320 together coordinate ADP. K368 carries the post-translational modification N6-succinyllysine. ADP contacts are provided by G388 and R391. K394 carries the N6-succinyllysine modification. Position 408 is a phosphoserine (S408). The interval 432 to 441 (VTDVLLLDVT) is interdomain linker. N6-acetyllysine; alternate is present on residues K565, K598, and K638. Residues K565, K598, and K638 each carry the N6-succinyllysine; alternate modification.

This sequence belongs to the heat shock protein 70 family. As to quaternary structure, interacts strongly with the intermediate form of FXN and weakly with its mature form. Interacts with HSCB. Associates with the mitochondrial contact site and cristae organizing system (MICOS) complex, composed of at least MICOS10/MIC10, CHCHD3/MIC19, CHCHD6/MIC25, APOOL/MIC27, IMMT/MIC60, APOO/MIC23/MIC26 and QIL1/MIC13. This complex was also known under the names MINOS or MitOS complex. The MICOS complex associates with mitochondrial outer membrane proteins SAMM50, MTX1, MTX2 and DNAJC11, mitochondrial inner membrane protein TMEM11 and with HSPA9. Interacts with DNLZ, the interaction is required to prevent self-aggregation. Interacts with TESPA1. Interacts with PDPN. Interacts with NFU1, NFS1 and ISCU. Interacts with TP53; the interaction promotes TP53 degradation. Interacts (via SBD domain) with UBXN2A; the interaction with UBXN2A inhibits HSPA9/MOT-2 interaction with and degradation of TP53, thereby promotes TP53 translocation to the nucleus. Interacts with ITPR1 AND VDAC1; this interaction couples ITPR1 to VDAC1. Component of the TIM23 mitochondrial inner membrane pre-sequence translocase complex.

Its subcellular location is the mitochondrion. The protein resides in the nucleus. The protein localises to the nucleolus. It localises to the cytoplasm. It is found in the mitochondrion matrix. The enzyme catalyses ATP + H2O = ADP + phosphate + H(+). With respect to regulation, the chaperone activity is regulated by ATP-induced allosteric coupling of the nucleotide-binding (NBD) and substrate-binding (SBD) domains. ATP binding in the NBD leads to a conformational change in the NBD, which is transferred through the interdomain linker (IDL) to the substrate-binding domain (SBD). This elicits a reduced substrate affinity and a faster substrate exchange rate. Upon hydrolysis of ATP to ADP, the protein undergoes a conformational change that increases its affinity for substrate proteins. It cycles through repeated phases of ATP hydrolysis and nucleotide exchange, facilitating repeated cycles of substrate binding and release. Functions in collaboration with co-chaperones. Functions with the co-chaperone, DNLZ, to maintain solubility and regulate ATP hydrolysis. Nucleotide exchange factors, GRPEL1 and GRPEL2, accelerate nucleotide exchange. Mitochondrial chaperone that plays a key role in mitochondrial protein import, folding, and assembly. Plays an essential role in the protein quality control system, the correct folding of proteins, the re-folding of misfolded proteins, and the targeting of proteins for subsequent degradation. These processes are achieved through cycles of ATP binding, ATP hydrolysis, and ADP release, mediated by co-chaperones. In mitochondria, it associates with the TIM (translocase of the inner membrane) protein complex to assist in the import and folding of mitochondrial proteins. Plays an important role in mitochondrial iron-sulfur cluster (ISC) biogenesis, interacts with and stabilizes ISC cluster assembly proteins FXN, NFU1, NFS1 and ISCU. Regulates erythropoiesis via stabilization of ISC assembly. Regulates mitochondrial calcium-dependent apoptosis by coupling two calcium channels, ITPR1 and VDAC1, at the mitochondria-associated endoplasmic reticulum (ER) membrane to facilitate calcium transport from the ER lumen to the mitochondria intermembrane space, providing calcium for the downstream calcium channel MCU, which releases it into the mitochondrial matrix. Although primarily located in the mitochondria, it is also found in other cellular compartments. In the cytosol, it associates with proteins involved in signaling, apoptosis, or senescence. It may play a role in cell cycle regulation via its interaction with and promotion of degradation of TP53. May play a role in the control of cell proliferation and cellular aging. Protects against reactive oxygen species (ROS). Extracellular HSPA9 plays a cytoprotective role by preventing cell lysis following immune attack by the membrane attack complex by disrupting formation of the complex. This is Stress-70 protein, mitochondrial from Canis lupus familiaris (Dog).